A 194-amino-acid chain; its full sequence is Thymidylate kinase (194 aa).

7–14 is a binding site for ATP; that stretch reads GIDTAGKS.

It belongs to the thymidylate kinase family.

It carries out the reaction dTMP + ATP = dTDP + ADP. Functionally, phosphorylation of dTMP to form dTDP in both de novo and salvage pathways of dTTP synthesis. This is Thymidylate kinase from Nautilia profundicola (strain ATCC BAA-1463 / DSM 18972 / AmH).